A 103-amino-acid chain; its full sequence is Large ribosomal subunit protein bL21 (103 aa).

The protein belongs to the bacterial ribosomal protein bL21 family. As to quaternary structure, part of the 50S ribosomal subunit. Contacts protein L20.

In terms of biological role, this protein binds to 23S rRNA in the presence of protein L20. This Aromatoleum aromaticum (strain DSM 19018 / LMG 30748 / EbN1) (Azoarcus sp. (strain EbN1)) protein is Large ribosomal subunit protein bL21.